The primary structure comprises 541 residues: Phosphoenolpyruvate carboxykinase (ATP) (541 aa).

Substrate-binding residues include arginine 67, tyrosine 207, and lysine 213. ATP is bound by residues lysine 213, histidine 232, and 248–256 (GLSGTGKTT). Residues lysine 213 and histidine 232 each coordinate Mn(2+). Aspartate 269 is a Mn(2+) binding site. ATP-binding positions include glutamate 297, arginine 333, 449-450 (RI), and threonine 455. Residue arginine 333 coordinates substrate.

Belongs to the phosphoenolpyruvate carboxykinase (ATP) family. In terms of assembly, monomer. The cofactor is Mn(2+).

It localises to the cytoplasm. The catalysed reaction is oxaloacetate + ATP = phosphoenolpyruvate + ADP + CO2. Its pathway is carbohydrate biosynthesis; gluconeogenesis. In terms of biological role, involved in the gluconeogenesis. Catalyzes the conversion of oxaloacetate (OAA) to phosphoenolpyruvate (PEP) through direct phosphoryl transfer between the nucleoside triphosphate and OAA. The polypeptide is Phosphoenolpyruvate carboxykinase (ATP) (Vibrio atlanticus (strain LGP32) (Vibrio splendidus (strain Mel32))).